We begin with the raw amino-acid sequence, 402 residues long: Meiosis-specific cyclin rem1 (402 aa).

Belongs to the cyclin family. Cyclin AB subfamily.

Functionally, required for pre-meiotic DNA synthesis and S phase progression. Regulates levels of meiotic intragenic recombination. This Schizosaccharomyces pombe (strain 972 / ATCC 24843) (Fission yeast) protein is Meiosis-specific cyclin rem1 (rem1).